A 261-amino-acid chain; its full sequence is MSNTLHEGFKFGDPGLINIRGTNGSGKSTIVKRYIPKGAVQKRFDDIGTTYYDCGTHFVVGRYETDCGGLDAVRGTYDPKTGQGIRPFEAGQIAIGRLAPLKTTFAEGVIYGTTFKGSKEVHDELAKTNTPYFWFSIDMPFQEVFDSVLLRRVKSGNADPLSTENIAKKFRPVLASLDKAVDAGLWTIYGHRDVIAQNVDDLVNNRPLTNADLIGRKPDLTKFNKEAQVWFDKGTVSPTQEMIDEHFPKPTTHGLGGFFKG.

Belongs to the thymidylate kinase family. 5-hmdU DNA kinase subfamily.

The catalysed reaction is 5-hydroxymethyl-dUMP in DNA + ATP = 5-phosphomethyl-dUMP in DNA + ADP + H(+). Its function is as follows. Phosphorylates 5-hydroxymethyluracil (5hmdU) into 5-phosphomethyl-2'-deoxyuridine (5- PmdU) on DNA as a step in the pathway leading to thymidine hypermodifications in the viral genome. As a final result of the pathway of hypermodification, 5-Nalpha-putrescinylthymidine (Nalpha-PutT) substitutes for about 50% of thymidines in the viral DNA. These modifications probably prevent degradation of viral genome by the host restriction-modification antiviral defense system. The polypeptide is 5-hmdU DNA kinase (Delftia phage PhiW-14 (Deftia acidovorans bacteriophage phiW-14)).